The following is a 614-amino-acid chain: Spastin (614 aa).

The disordered stretch occupies residues Met1–Pro45. The interval Met1 to Leu50 is required for nuclear localization. Topologically, residues Met1–Pro56 are cytoplasmic. Positions Met1 to Gln80 are required for interaction with ATL1. The segment at Met1 to Leu192 is required for midbody localization. The segment at Met1–Lys298 is required for interaction with RTN1. Positions Pro4–Lys11 match the Nuclear localization signal motif. 2 stretches are compositionally biased toward pro residues: residues Ser18–Cys28 and Ala35–Ser44. The segment at Leu50–Met87 is required for interaction with SSNA1 and microtubules. An intramembrane region (helical) is located at residues Leu57–Trp77. The short motif at Leu59–Val67 is the Nuclear export signal element. At Leu78–Val614 the chain is on the cytoplasmic side. Residues Glu110–Glu194 form a sufficient for interaction with CHMP1B region. The required for interaction with microtubules stretch occupies residues Glu112–Pro198. An MIT domain is found at His118–Leu193. The segment at Asn220–Lys310 is disordered. The interval Glu226–Val614 is sufficient for microtubule severing. A phosphoserine mark is found at Ser243 and Ser266. The tract at residues Ser268–Ile326 is required for interaction with microtubules and microtubule severing. Polar residues predominate over residues His287–Thr304. The residue at position 304 (Thr304) is a Phosphothreonine. The short motif at Arg307–Lys310 is the Nuclear localization signal element. Residue Gly380–Thr387 coordinates ATP. Ser595 carries the post-translational modification Phosphoserine.

This sequence belongs to the AAA ATPase family. Spastin subfamily. Homohexamer. Mostly monomeric, but assembles into hexameric structure for short periods of time. Oligomerization seems to be a prerequisite for catalytic activity. Binding to ATP in a cleft between two adjacent subunits stabilizes the homohexameric form. Binds to microtubules at least in part via the alpha-tubulin and beta-tubulin tails. The hexamer adopts a ring conformation through which microtubules pass prior to being severed. Does not interact strongly with tubulin heterodimers. Interacts (via MIT domain) with CHMP1B; the interaction is direct. Interacts with SSNA1. Interacts with ATL1. Interacts with RTN1. Interacts with ZFYVE27. Interacts with REEP1. Interacts (via MIT domain) with IST1.

The protein resides in the membrane. It localises to the endoplasmic reticulum. Its subcellular location is the midbody. The protein localises to the cytoplasm. It is found in the cytoskeleton. The protein resides in the microtubule organizing center. It localises to the centrosome. Its subcellular location is the perinuclear region. The protein localises to the nucleus. It is found in the spindle. The protein resides in the cell projection. It localises to the axon. The enzyme catalyses n ATP + n H2O + a microtubule = n ADP + n phosphate + (n+1) alpha/beta tubulin heterodimers.. With respect to regulation, allosteric enzyme with a cooperative mechanism; at least two neighbor subunits influence each other strongly in spastin hexamers. Microtubule binding promotes cooperative interactions among spastin subunits. Functionally, ATP-dependent microtubule severing protein that specifically recognizes and cuts microtubules that are polyglutamylated. Preferentially recognizes and acts on microtubules decorated with short polyglutamate tails: severing activity increases as the number of glutamates per tubulin rises from one to eight, but decreases beyond this glutamylation threshold. Severing activity is not dependent on tubulin acetylation or detyrosination. Microtubule severing promotes reorganization of cellular microtubule arrays and the release of microtubules from the centrosome following nucleation. It is critical for the biogenesis and maintenance of complex microtubule arrays in axons, spindles and cilia. SPAST is involved in abscission step of cytokinesis and nuclear envelope reassembly during anaphase in cooperation with the ESCRT-III complex. Recruited at the midbody, probably by IST1, and participates in membrane fission during abscission together with the ESCRT-III complex. Recruited to the nuclear membrane by IST1 and mediates microtubule severing, promoting nuclear envelope sealing and mitotic spindle disassembly during late anaphase. Required for membrane traffic from the endoplasmic reticulum (ER) to the Golgi and endosome recycling. Recruited by IST1 to endosomes and regulates early endosomal tubulation and recycling by mediating microtubule severing. Probably plays a role in axon growth and the formation of axonal branches. This chain is Spastin, found in Bos taurus (Bovine).